A 672-amino-acid polypeptide reads, in one-letter code: Spermatid perinuclear RNA-binding protein (672 aa).

Residues 5–363 (RSFANDDRHV…ALKRPFEDGL (359 aa)) form the DZF domain. Disordered regions lie at residues 52–73 (TNKGTKTEGETEVKKDEAGENY) and 349–371 (GAGSSALKRPFEDGLGDDKDPNK). A compositionally biased stretch (basic and acidic residues) spans 357–371 (RPFEDGLGDDKDPNK). Residues 387–453 (DLMNALMRLN…AVKVLQAMGY (67 aa)) form the DRBM 1 domain. The span at 466 to 476 (SDEKSDNESKN) shows a compositional bias: basic and acidic residues. Positions 466-499 (SDEKSDNESKNETVSSNSSNNTGNSTTETSSTLE) are disordered. The span at 477-497 (ETVSSNSSNNTGNSTTETSST) shows a compositional bias: low complexity. Residues 510 to 576 (SGKNPVMELN…ALAALEKLFS (67 aa)) enclose the DRBM 2 domain. Residues R612 and R617 each carry the asymmetric dimethylarginine modification.

In terms of assembly, interacts with EIF2AK2. Associates with microtubules; it is unsure whether such interaction is direct or indirect.

It is found in the cytoplasm. Functionally, involved in spermatogenesis and sperm function. Plays a role in regulation of cell growth. Binds to double-stranded DNA and RNA. Binds most efficiently to poly(I:C) RNA than to poly(dI:dC) DNA. Binds also to single-stranded poly(G) RNA. Binds non-specifically to the mRNA PRM1 3'-UTR and adenovirus VA RNA. The chain is Spermatid perinuclear RNA-binding protein (STRBP) from Homo sapiens (Human).